Consider the following 1407-residue polypeptide: DNA-directed RNA polymerase subunit beta' (1407 aa).

Residues cysteine 70, cysteine 72, cysteine 85, and cysteine 88 each contribute to the Zn(2+) site. Residues aspartate 460, aspartate 462, and aspartate 464 each contribute to the Mg(2+) site. Zn(2+) contacts are provided by cysteine 814, cysteine 888, cysteine 895, and cysteine 898.

The protein belongs to the RNA polymerase beta' chain family. In terms of assembly, the RNAP catalytic core consists of 2 alpha, 1 beta, 1 beta' and 1 omega subunit. When a sigma factor is associated with the core the holoenzyme is formed, which can initiate transcription. Mg(2+) is required as a cofactor. The cofactor is Zn(2+).

It carries out the reaction RNA(n) + a ribonucleoside 5'-triphosphate = RNA(n+1) + diphosphate. DNA-dependent RNA polymerase catalyzes the transcription of DNA into RNA using the four ribonucleoside triphosphates as substrates. In Salmonella choleraesuis (strain SC-B67), this protein is DNA-directed RNA polymerase subunit beta'.